Consider the following 390-residue polypeptide: MDGKFGKYGGIFVPELLIPALEELEAAFLHYSKDRRFNEDLEHYLREYAGRPTGLYHARNLSEKLGCRVYLKREDMLHTGAHKINNTIGQALLAGYMGKRRLIAETGAGQHGIATAAAGALFGMDVDVYMGTEDVERQKLNVFRMEISGARVIPVDSGSRTLKDAINQAMRDWISSVEDTHYLIGSTMGPHPYPTMVKHFQSVIGREAREQILEIEGELPDTIIACVGGGSNAIGIFSAFLDDDVELIGAEGGGEGIESGNHGATLSAGSEGVLHGSLSYVLQDDDGQINEAHSVSAGLDYPGVGPEHAYLMETGRAMYEPITDAEALRGFKLLSRCEGIMPALESAHAIACLEKYASKPENRGKTVIVNLSGRGDKDMFLAAGLLGVDL.

Position 83 is an N6-(pyridoxal phosphate)lysine (Lys83).

Belongs to the TrpB family. As to quaternary structure, tetramer of two alpha and two beta chains. Pyridoxal 5'-phosphate is required as a cofactor.

The catalysed reaction is (1S,2R)-1-C-(indol-3-yl)glycerol 3-phosphate + L-serine = D-glyceraldehyde 3-phosphate + L-tryptophan + H2O. The protein operates within amino-acid biosynthesis; L-tryptophan biosynthesis; L-tryptophan from chorismate: step 5/5. In terms of biological role, the beta subunit is responsible for the synthesis of L-tryptophan from indole and L-serine. The protein is Tryptophan synthase beta chain 2 (trpB2) of Methanothermobacter marburgensis (strain ATCC BAA-927 / DSM 2133 / JCM 14651 / NBRC 100331 / OCM 82 / Marburg) (Methanobacterium thermoautotrophicum).